Here is a 116-residue protein sequence, read N- to C-terminus: MARQYRSDRLSQEIEKEVSDILRRRVRDPRVEGVTITGVDVTGDLQQAKIYYSILSDKASDDQKTKAGLEKASGLIRKELGSRLSIYKTPELSFIRDESVQYGDKIDQLLNKLNRD.

This sequence belongs to the RbfA family. In terms of assembly, monomer. Binds 30S ribosomal subunits, but not 50S ribosomal subunits or 70S ribosomes.

It is found in the cytoplasm. Its function is as follows. One of several proteins that assist in the late maturation steps of the functional core of the 30S ribosomal subunit. Associates with free 30S ribosomal subunits (but not with 30S subunits that are part of 70S ribosomes or polysomes). Required for efficient processing of 16S rRNA. May interact with the 5'-terminal helix region of 16S rRNA. This is Ribosome-binding factor A from Pediococcus pentosaceus (strain ATCC 25745 / CCUG 21536 / LMG 10740 / 183-1w).